A 180-amino-acid polypeptide reads, in one-letter code: MSAAFKELYNTKIVPKLVSDFNYDSVMQVPKLEKIVVNMGVGEAVSNSKLLDQAVEELTLLTGQKPVITKAKKSISNFKLREGQSIGAKVTLRGDRMYYFLEKLVSVALPRVRDFRGVSANAFDGRGNYTLGVKEQIIFPEINIDKVNKVRGMDIIIVTTAQTDAEAKSLLTEFGFPFKK.

It belongs to the universal ribosomal protein uL5 family. In terms of assembly, part of the 50S ribosomal subunit; part of the 5S rRNA/L5/L18/L25 subcomplex. Contacts the 5S rRNA and the P site tRNA. Forms a bridge to the 30S subunit in the 70S ribosome.

This is one of the proteins that bind and probably mediate the attachment of the 5S RNA into the large ribosomal subunit, where it forms part of the central protuberance. In the 70S ribosome it contacts protein S13 of the 30S subunit (bridge B1b), connecting the 2 subunits; this bridge is implicated in subunit movement. Contacts the P site tRNA; the 5S rRNA and some of its associated proteins might help stabilize positioning of ribosome-bound tRNAs. The polypeptide is Large ribosomal subunit protein uL5 (Acholeplasma laidlawii (strain PG-8A)).